A 163-amino-acid polypeptide reads, in one-letter code: Bacterial microcompartment assembly protein PduM (163 aa).

The protein belongs to the PduM family. In terms of assembly, interacts with shell protein PduK.

It localises to the bacterial microcompartment. Its pathway is polyol metabolism; 1,2-propanediol degradation. Functionally, plays an essential role in assembly and/or stability of the bacterial microcompartment (BMC) dedicated to 1,2-propanediol (1,2-PD) degradation. Overexpression impairs BMC formation. In terms of biological role, the 1,2-PD-specific bacterial microcompartment (BMC) concentrates low levels of 1,2-PD catabolic enzymes, concentrates volatile reaction intermediates thus enhancing pathway flux and keeps the level of toxic, mutagenic propionaldehyde low. The protein is Bacterial microcompartment assembly protein PduM of Salmonella typhimurium (strain LT2 / SGSC1412 / ATCC 700720).